A 165-amino-acid polypeptide reads, in one-letter code: UPF0179 protein Igni_1272 (165 aa).

The protein belongs to the UPF0179 family.

This Ignicoccus hospitalis (strain KIN4/I / DSM 18386 / JCM 14125) protein is UPF0179 protein Igni_1272.